A 75-amino-acid polypeptide reads, in one-letter code: UPF0352 protein ASA_2693 (75 aa).

The protein belongs to the UPF0352 family.

This is UPF0352 protein ASA_2693 from Aeromonas salmonicida (strain A449).